The sequence spans 507 residues: Ribose import ATP-binding protein RbsA 2 (507 aa).

ABC transporter domains follow at residues 7 to 245 (FSLD…VGRN) and 249 to 498 (LFTR…MPQS). An ATP-binding site is contributed by 39-46 (GENGAGKS).

This sequence belongs to the ABC transporter superfamily. Ribose importer (TC 3.A.1.2.1) family. The complex is composed of an ATP-binding protein (RbsA), two transmembrane proteins (RbsC) and a solute-binding protein (RbsB).

The protein resides in the cell inner membrane. It catalyses the reaction D-ribose(out) + ATP + H2O = D-ribose(in) + ADP + phosphate + H(+). Functionally, part of the ABC transporter complex RbsABC involved in ribose import. Responsible for energy coupling to the transport system. The polypeptide is Ribose import ATP-binding protein RbsA 2 (Mesorhizobium japonicum (strain LMG 29417 / CECT 9101 / MAFF 303099) (Mesorhizobium loti (strain MAFF 303099))).